The following is a 171-amino-acid chain: S-ribosylhomocysteine lyase (171 aa).

Fe cation-binding residues include histidine 54, histidine 58, and cysteine 128.

The protein belongs to the LuxS family. As to quaternary structure, homodimer. The cofactor is Fe cation.

The enzyme catalyses S-(5-deoxy-D-ribos-5-yl)-L-homocysteine = (S)-4,5-dihydroxypentane-2,3-dione + L-homocysteine. Functionally, involved in the synthesis of autoinducer 2 (AI-2) which is secreted by bacteria and is used to communicate both the cell density and the metabolic potential of the environment. The regulation of gene expression in response to changes in cell density is called quorum sensing. Catalyzes the transformation of S-ribosylhomocysteine (RHC) to homocysteine (HC) and 4,5-dihydroxy-2,3-pentadione (DPD). The sequence is that of S-ribosylhomocysteine lyase from Shigella flexneri.